A 47-amino-acid chain; its full sequence is Glyceraldehyde-3-phosphate dehydrogenase, cytosolic (47 aa).

It belongs to the glyceraldehyde-3-phosphate dehydrogenase family. In terms of assembly, homotetramer.

The protein resides in the cytoplasm. The enzyme catalyses D-glyceraldehyde 3-phosphate + phosphate + NAD(+) = (2R)-3-phospho-glyceroyl phosphate + NADH + H(+). Its pathway is carbohydrate degradation; glycolysis; pyruvate from D-glyceraldehyde 3-phosphate: step 1/5. In Pseudotsuga menziesii (Douglas-fir), this protein is Glyceraldehyde-3-phosphate dehydrogenase, cytosolic.